Here is a 274-residue protein sequence, read N- to C-terminus: Exosome complex component Rrp42 (274 aa).

It belongs to the RNase PH family. Rrp42 subfamily. In terms of assembly, component of the archaeal exosome complex. Forms a hexameric ring-like arrangement composed of 3 Rrp41-Rrp42 heterodimers. The hexameric ring associates with a trimer of Rrp4 and/or Csl4 subunits.

It is found in the cytoplasm. In terms of biological role, non-catalytic component of the exosome, which is a complex involved in RNA degradation. Contributes to the structuring of the Rrp41 active site. In Pyrobaculum aerophilum (strain ATCC 51768 / DSM 7523 / JCM 9630 / CIP 104966 / NBRC 100827 / IM2), this protein is Exosome complex component Rrp42.